The primary structure comprises 111 residues: MSGWYEISQAKDGQYRFVLKAGNGEIILTSELYKAKASAENGIASVQKNSSDDARYERLVAKNDKPYFNLKAANHQVIGTSQFYASEQSRDKGIESVKNNGTTATVKDLTG.

2 tandem repeats follow at residues 10–58 (AKDG…RYER) and 61–109 (AKND…VKDL). The tract at residues 89–111 (SRDKGIESVKNNGTTATVKDLTG) is disordered.

The protein belongs to the UPF0339 family. Duplicated subfamily.

This is UPF0339 protein ACIAD0721 from Acinetobacter baylyi (strain ATCC 33305 / BD413 / ADP1).